The primary structure comprises 559 residues: Cytokine-like nuclear factor N-PAC (559 aa).

The 62-residue stretch at 9-70 (VNDLVWAKMK…ETQIKPYQEF (62 aa)) folds into the PWWP domain. The interval 106-137 (SEQDNRPDPDVEFNKLREGGTESGEETTVNNT) is disordered. Residues 108-125 (QDNRPDPDVEFNKLREGG) are compositionally biased toward basic and acidic residues. The dehydrogenase domain stretch occupies residues 267–559 (RNIQASNLKF…SSAVYVRARF (293 aa)). Residues 277–291 (GFLG…MVKN) and K511 each bind NAD(+).

The protein belongs to the HIBADH-related family. NP60 subfamily. Binds to mononucleosomes.

It localises to the chromosome. In terms of biological role, nucleosome-destabilizing factor that is recruited to genes during transcriptional activation and colocalizes with a subset of trimethylated 'Lys-36' histone H3 (H3K36me3)-enriched regions. This is Cytokine-like nuclear factor N-PAC from Aedes aegypti (Yellowfever mosquito).